The sequence spans 369 residues: Anhydro-N-acetylmuramic acid kinase (369 aa).

12–19 (GTSLDGVD) provides a ligand contact to ATP.

The protein belongs to the anhydro-N-acetylmuramic acid kinase family.

It carries out the reaction 1,6-anhydro-N-acetyl-beta-muramate + ATP + H2O = N-acetyl-D-muramate 6-phosphate + ADP + H(+). Its pathway is amino-sugar metabolism; 1,6-anhydro-N-acetylmuramate degradation. It participates in cell wall biogenesis; peptidoglycan recycling. In terms of biological role, catalyzes the specific phosphorylation of 1,6-anhydro-N-acetylmuramic acid (anhMurNAc) with the simultaneous cleavage of the 1,6-anhydro ring, generating MurNAc-6-P. Is required for the utilization of anhMurNAc either imported from the medium or derived from its own cell wall murein, and thus plays a role in cell wall recycling. The sequence is that of Anhydro-N-acetylmuramic acid kinase from Actinobacillus pleuropneumoniae serotype 7 (strain AP76).